The chain runs to 232 residues: uncharacterized protein (232 aa).

A disordered region spans residues 119 to 145 (DEEYRENSKAPEAKARPSFVGEGRRLG). Residues 123–133 (RENSKAPEAKA) are compositionally biased toward basic and acidic residues.

This is an uncharacterized protein from Encephalitozoon cuniculi (strain GB-M1) (Microsporidian parasite).